Consider the following 480-residue polypeptide: Argininosuccinate lyase (480 aa).

The segment at 1 to 20 is disordered; the sequence is MTQQDGGQAGQAEPTKLWGG.

The protein belongs to the lyase 1 family. Argininosuccinate lyase subfamily.

It localises to the cytoplasm. It carries out the reaction 2-(N(omega)-L-arginino)succinate = fumarate + L-arginine. It participates in amino-acid biosynthesis; L-arginine biosynthesis; L-arginine from L-ornithine and carbamoyl phosphate: step 3/3. The polypeptide is Argininosuccinate lyase (Saccharopolyspora erythraea (strain ATCC 11635 / DSM 40517 / JCM 4748 / NBRC 13426 / NCIMB 8594 / NRRL 2338)).